Reading from the N-terminus, the 84-residue chain is RNA-binding protein Hfq (84 aa).

The region spanning 10–70 (DNVLNQVRKN…VSTIIPGKTL (61 aa)) is the Sm domain.

Belongs to the Hfq family. In terms of assembly, homohexamer.

Functionally, RNA chaperone that binds small regulatory RNA (sRNAs) and mRNAs to facilitate mRNA translational regulation in response to envelope stress, environmental stress and changes in metabolite concentrations. Also binds with high specificity to tRNAs. In Natranaerobius thermophilus (strain ATCC BAA-1301 / DSM 18059 / JW/NM-WN-LF), this protein is RNA-binding protein Hfq.